We begin with the raw amino-acid sequence, 58 residues long: MAVPKRKMSRSNTRVRRSQWKAARPLLTSCPRCRDPKLPHVACPTCGTYSNRQVINPA.

The protein belongs to the bacterial ribosomal protein bL32 family.

In Thermobifida fusca (strain YX), this protein is Large ribosomal subunit protein bL32.